The primary structure comprises 456 residues: Enolase (456 aa).

Residue glutamine 169 coordinates (2R)-2-phosphoglycerate. Glutamate 211 serves as the catalytic Proton donor. Residues aspartate 252, glutamate 314, and aspartate 341 each contribute to the Mg(2+) site. (2R)-2-phosphoglycerate contacts are provided by lysine 366, arginine 395, serine 396, and lysine 417. Catalysis depends on lysine 366, which acts as the Proton acceptor.

The protein belongs to the enolase family. Requires Mg(2+) as cofactor.

It localises to the cytoplasm. It is found in the secreted. The protein localises to the cell surface. It carries out the reaction (2R)-2-phosphoglycerate = phosphoenolpyruvate + H2O. Its pathway is carbohydrate degradation; glycolysis; pyruvate from D-glyceraldehyde 3-phosphate: step 4/5. Catalyzes the reversible conversion of 2-phosphoglycerate (2-PG) into phosphoenolpyruvate (PEP). It is essential for the degradation of carbohydrates via glycolysis. This Metamycoplasma arthritidis (strain 158L3-1) (Mycoplasma arthritidis) protein is Enolase.